Consider the following 400-residue polypeptide: Coiled-coil domain-containing glutamate-rich protein 1 (400 aa).

Residues 1-11 (MTQTVNEREDP) are compositionally biased toward basic and acidic residues. Disordered regions lie at residues 1–68 (MTQT…IPGP), 134–164 (RPPG…PPID), and 203–353 (QEKL…DKFL). Residues 31–45 (YHRRQRGAPMSKRRY) are compositionally biased toward basic residues. Basic and acidic residues predominate over residues 46 to 57 (RDGPKTEYEAPR). Positions 137-157 (GRKKRWGRRGRGLRRHPRRSF) are enriched in basic residues. Over residues 209–220 (QQAALRAHQAQA) the composition is skewed to low complexity. Over residues 255 to 271 (PSLTFSPAPGQQNQSPT) the composition is skewed to polar residues. Residues 275-347 (VEEEEKNVDD…EAGLEEGEQR (73 aa)) are compositionally biased toward acidic residues. Positions 299 to 335 (EEEEVDGESEDEDVDEEEVEEAGNGEEREEDQEEEDV) form a coiled coil.

The protein localises to the nucleus. Its function is as follows. Regulator of histone epigenetic modifications and chromatin compaction into the sperm head, required for histone-to-protamine (HTP) transition. HTP is a key event in which somatic histones are first replaced by testis-specific histone variants, then transition proteins (TNPs) are incorporated into the spermatid nucleus, and finally protamines (PRMs) replace the TNPs to promote chromatin condensation. This chain is Coiled-coil domain-containing glutamate-rich protein 1 (Ccer1), found in Rattus norvegicus (Rat).